A 92-amino-acid polypeptide reads, in one-letter code: Small ribosomal subunit protein bS16 (92 aa).

The protein belongs to the bacterial ribosomal protein bS16 family.

The sequence is that of Small ribosomal subunit protein bS16 from Desulforudis audaxviator (strain MP104C).